The primary structure comprises 314 residues: Acetyl-coenzyme A carboxylase carboxyl transferase subunit alpha (314 aa).

In terms of domain architecture, CoA carboxyltransferase C-terminal spans 32–289 (EIDMLEASLK…KKMFLKHLNE (258 aa)).

This sequence belongs to the AccA family. In terms of assembly, acetyl-CoA carboxylase is a heterohexamer composed of biotin carboxyl carrier protein (AccB), biotin carboxylase (AccC) and two subunits each of ACCase subunit alpha (AccA) and ACCase subunit beta (AccD).

It is found in the cytoplasm. The enzyme catalyses N(6)-carboxybiotinyl-L-lysyl-[protein] + acetyl-CoA = N(6)-biotinyl-L-lysyl-[protein] + malonyl-CoA. It participates in lipid metabolism; malonyl-CoA biosynthesis; malonyl-CoA from acetyl-CoA: step 1/1. Its function is as follows. Component of the acetyl coenzyme A carboxylase (ACC) complex. First, biotin carboxylase catalyzes the carboxylation of biotin on its carrier protein (BCCP) and then the CO(2) group is transferred by the carboxyltransferase to acetyl-CoA to form malonyl-CoA. This chain is Acetyl-coenzyme A carboxylase carboxyl transferase subunit alpha, found in Staphylococcus epidermidis (strain ATCC 35984 / DSM 28319 / BCRC 17069 / CCUG 31568 / BM 3577 / RP62A).